The primary structure comprises 316 residues: Ribosomal RNA small subunit methyltransferase H (316 aa).

Residues 35–37, Asp55, Phe79, Asp101, and Gln108 contribute to the S-adenosyl-L-methionine site; that span reads GGH.

It belongs to the methyltransferase superfamily. RsmH family.

Its subcellular location is the cytoplasm. It catalyses the reaction cytidine(1402) in 16S rRNA + S-adenosyl-L-methionine = N(4)-methylcytidine(1402) in 16S rRNA + S-adenosyl-L-homocysteine + H(+). Its function is as follows. Specifically methylates the N4 position of cytidine in position 1402 (C1402) of 16S rRNA. This chain is Ribosomal RNA small subunit methyltransferase H, found in Vibrio campbellii (strain ATCC BAA-1116).